A 231-amino-acid chain; its full sequence is Putative cobalt transport protein CbiM 1 (231 aa).

6 helical membrane passes run 6–26 (GFLPIGWCVFWAVLAAPFLIY), 41–61 (VLPLMAVCGAFIFVVSLVDIP), 79–99 (FFGPAVTSVLGLIILVFQALL), 107–127 (TLGATAFSMAVMGPLAAWLVF), 136–156 (VPLGPAVFCAAVVANCVTYLI), and 172–192 (LTAFLAAAAVFAVVQIPISII).

Belongs to the CbiM family. In terms of assembly, forms an energy-coupling factor (ECF) transporter complex composed of an ATP-binding protein (A component, CbiO), a transmembrane protein (T component, CbiQ) and 2 possible substrate-capture proteins (S components, CbiM and CbiN) of unknown stoichimetry.

The protein localises to the cell membrane. Its pathway is cofactor biosynthesis; adenosylcobalamin biosynthesis. In terms of biological role, part of the energy-coupling factor (ECF) transporter complex CbiMNOQ involved in cobalt import. This Methanocorpusculum labreanum (strain ATCC 43576 / DSM 4855 / Z) protein is Putative cobalt transport protein CbiM 1.